A 316-amino-acid polypeptide reads, in one-letter code: Metal tolerance protein 8 (316 aa).

The Cytoplasmic segment spans residues 1–15 (MGPVRHILNERKSRK). The chain crosses the membrane as a helical span at residues 16–36 (IAAFLLINTAYMFVEFTSGFM). The Vacuolar segment spans residues 37–45 (SDSLGLISD). A helical membrane pass occupies residues 46–66 (ACHMLFDCAALAIGLYASYIA). Topologically, residues 67-80 (RLPANGLYNYGRGR) are cytoplasmic. Residues 81–101 (FEVLSGYVNAVFLVLVGALIV) traverse the membrane as a helical segment. The Vacuolar segment spans residues 102 to 116 (LESFERILEPREIST). A helical membrane pass occupies residues 117–137 (SSLLTVSIGGLVVNVIGLVFF). Over 138-176 (HEEHHHAHGEAHSCNGGLQSSENHNKSRNRHHIDHNMEG) the chain is Cytoplasmic. Residues 147–166 (EAHSCNGGLQSSENHNKSRN) are disordered. A helical membrane pass occupies residues 177–197 (IFLHVLADTMGSVGVVISTLL). The Vacuolar portion of the chain corresponds to 198-202 (IKYKG). The helical transmembrane segment at 203-223 (WLIADPICSVFISIMIVSSVL) threads the bilayer. Residues 224-316 (PLLRNSAEIL…LTIQIECVKR (93 aa)) are Cytoplasmic-facing.

Belongs to the cation diffusion facilitator (CDF) transporter (TC 2.A.4) family. SLC30A subfamily.

Its subcellular location is the vacuole membrane. In terms of biological role, involved in sequestration of excess metal in the cytoplasm into vacuoles to maintain metal homeostasis. This is Metal tolerance protein 8 (MTP8) from Oryza sativa subsp. japonica (Rice).